Consider the following 416-residue polypeptide: Solute carrier family 35 member D3 (416 aa).

Transmembrane regions (helical) follow at residues 9–29, 38–58, 64–84, 103–123, 131–151, 155–175, 187–207, 224–244, 257–277, and 280–300; these read VLGI…NILL, FSFL…SLEL, LIAV…VAVL, MYVV…VLVL, GVLA…AGDL, PIGY…LVLI, LTAQ…CSFA, AMVC…FTTL, FVGV…FSDV, and TSLF…YCVA. The interval 334–384 is disordered; that stretch reads MEELPGEGGNGRSEGGEAAGGPAQESRQEVRGSPRGVPLVAGSSEEGSRRS. A compositionally biased stretch (gly residues) spans 339-352; sequence GEGGNGRSEGGEAA.

The protein belongs to the TPT transporter family. SLC35D subfamily. As to quaternary structure, could interact with ATG14, BECN1 and PIK3C3 that form the PI3KC3-C1/AIC/autophagy initiation complex; enhancing the formation of the AIC and promoting autophagy.

It is found in the cytoplasmic vesicle. The protein localises to the secretory vesicle. Its subcellular location is the synaptic vesicle membrane. The protein resides in the early endosome membrane. It localises to the endoplasmic reticulum membrane. It catalyses the reaction UDP-alpha-D-glucose(in) = UDP-alpha-D-glucose(out). With respect to regulation, inhibited by proton uncouplers that directly abolish the proton electrochemical gradient. Its function is as follows. Probable UDP-glucose transmembrane transporter involved in UDP-glucose transport from the cytosol to the lumen of synaptic vesicles. It is involved in platelet dense granules maturation. Functionally, alternatively, could function as a molecular adapter enhancing the formation of the PI3KC3-C1/AIC/autophagy initiation complex to promote autophagy in dopaminergic neurons. Could also regulate the plasma membrane localization of the D(1A) dopamine receptor/DRD1 and dopamine signaling. The sequence is that of Solute carrier family 35 member D3 from Homo sapiens (Human).